Consider the following 66-residue polypeptide: Pteroicidin-alpha (66 aa).

Positions 1 to 22 (MKCIALFLVLSMVVLMAEPGEA) are cleaved as a signal peptide. Arginine 43 carries the post-translational modification Arginine amide; partial. The propeptide occupies 44-66 (GKNRDMAEQQELERAFDRERAFA).

It belongs to the pleurocidin family. In terms of processing, this peptide exists in N-terminally amidated and non-amidated forms. The amidated form is more active and has a greater alpha-helix content than the non-amidated form. In terms of tissue distribution, expressed in gill, skin, intestine, spleen, anterior kidney, and blood cells.

The protein localises to the secreted. In terms of biological role, the amidated peptide is bactericidal on human pathogens like S.aureus or E.coli, as well as on the fish pathogen A.salmonicida. May also be active against a variety of fungi. It can kill bacteria in less than 30 minutes (S.aureus) and 120 minutes (V.vulnificus). It induces hemolysis of erythrocytes from human and fishes (sea bass and lesser-spotted dogfish). Functionally, the non-amidated peptide only inhibits growth of human pathogens like S.aureus or E.coli, and the fish pathogen A.salmonicida. Induces hemolysis of erythrocytes from human and fishes (sea bass and lesser-spotted dogfish). The protein is Pteroicidin-alpha of Pterois volitans (Red lionfish).